The following is a 783-amino-acid chain: Endonuclease MutS2 (783 aa).

333–340 is an ATP binding site; sequence GPNTGGKT. The Smr domain occupies 708–783; sequence IDLRGKNIEE…GLGATFIYLK (76 aa).

It belongs to the DNA mismatch repair MutS family. MutS2 subfamily. In terms of assembly, homodimer. Binds to stalled ribosomes, contacting rRNA.

Functionally, endonuclease that is involved in the suppression of homologous recombination and thus may have a key role in the control of bacterial genetic diversity. In terms of biological role, acts as a ribosome collision sensor, splitting the ribosome into its 2 subunits. Detects stalled/collided 70S ribosomes which it binds and splits by an ATP-hydrolysis driven conformational change. Acts upstream of the ribosome quality control system (RQC), a ribosome-associated complex that mediates the extraction of incompletely synthesized nascent chains from stalled ribosomes and their subsequent degradation. Probably generates substrates for RQC. This Finegoldia magna (strain ATCC 29328 / DSM 20472 / WAL 2508) (Peptostreptococcus magnus) protein is Endonuclease MutS2.